Reading from the N-terminus, the 357-residue chain is 3-dehydroquinate synthase (357 aa).

Residues 104-108 (GVVGD), 128-129 (TT), Lys141, and 168-171 (FLET) each bind NAD(+). Positions 183, 243, and 260 each coordinate Zn(2+).

The protein belongs to the sugar phosphate cyclases superfamily. Dehydroquinate synthase family. Requires Co(2+) as cofactor. The cofactor is Zn(2+). NAD(+) serves as cofactor.

Its subcellular location is the cytoplasm. The enzyme catalyses 7-phospho-2-dehydro-3-deoxy-D-arabino-heptonate = 3-dehydroquinate + phosphate. The protein operates within metabolic intermediate biosynthesis; chorismate biosynthesis; chorismate from D-erythrose 4-phosphate and phosphoenolpyruvate: step 2/7. Its function is as follows. Catalyzes the conversion of 3-deoxy-D-arabino-heptulosonate 7-phosphate (DAHP) to dehydroquinate (DHQ). In Streptococcus pyogenes serotype M49 (strain NZ131), this protein is 3-dehydroquinate synthase.